Consider the following 367-residue polypeptide: Germination protease (367 aa).

Positions 1-15 (MKEPLDLSKYAVRTD) are excised as a propeptide.

It belongs to the peptidase A25 family. In terms of assembly, homotetramer. Autoproteolytically processed. The inactive tetrameric zymogen termed p46 autoprocesses to a smaller form termed p41, which is active only during spore germination.

It carries out the reaction Endopeptidase action with P4 Glu or Asp, P1 preferably Glu &gt; Asp, P1' hydrophobic and P2' Ala.. Functionally, initiates the rapid degradation of small, acid-soluble proteins during spore germination. The sequence is that of Germination protease from Bacillus cytotoxicus (strain DSM 22905 / CIP 110041 / 391-98 / NVH 391-98).